Reading from the N-terminus, the 125-residue chain is Outer membrane protein assembly factor BamE (125 aa).

The signal sequence occupies residues 1–17; that stretch reads MNKTLILALSALLGLAA. C18 carries the N-palmitoyl cysteine lipid modification. C18 carries the S-diacylglycerol cysteine lipid modification.

Belongs to the BamE family. In terms of assembly, part of the Bam complex.

The protein resides in the cell outer membrane. Its function is as follows. Part of the outer membrane protein assembly complex, which is involved in assembly and insertion of beta-barrel proteins into the outer membrane. The sequence is that of Outer membrane protein assembly factor BamE from Neisseria meningitidis serogroup B (strain ATCC BAA-335 / MC58).